The following is an 847-amino-acid chain: A-kinase anchor protein 4 (847 aa).

The propeptide occupies 1-187 (MIAYCGTTKM…MAASKNTNNN (187 aa)). Phosphoserine occurs at positions 95, 129, 189, and 203. Residues 182 to 204 (KNTNNNQSPSNPATKSPSNQRSV) are compositionally biased toward polar residues. The interval 182–209 (KNTNNNQSPSNPATKSPSNQRSVATPDG) is disordered. Residue threonine 206 is modified to Phosphothreonine. Phosphoserine occurs at positions 212, 225, and 270. The segment at 218-231 (YYVNRLSSLVIQMA) is interaction with Prkar1a and Prkar2a. A Phosphotyrosine modification is found at tyrosine 300. Phosphoserine is present on residues serine 301, serine 304, serine 340, serine 430, serine 441, serine 443, serine 462, serine 491, serine 496, and serine 503. Residues 334–343 (YANQVASDMM) form a PKA-RI subunit binding domain region. Threonine 505 carries the phosphothreonine modification. The tract at residues 511-536 (KQGTQGRVPNKVCPSKDEKREKISPS) is disordered. Positions 524–533 (PSKDEKREKI) are enriched in basic and acidic residues. 2 positions are modified to phosphoserine: serine 536 and serine 581. A disordered region spans residues 583–613 (QYEKSGGGQSSKSLSMKHFESRGAPGPSTCA). 8 positions are modified to phosphoserine: serine 626, serine 631, serine 648, serine 650, serine 674, serine 677, serine 700, and serine 729. Residues 655 to 677 (CCDSRSKQAAPVAKRPEDQSQDS) are disordered.

The protein belongs to the AKAP110 family. As to quaternary structure, interacts with PRKAR1A and PRKAR2A. Interacts with ENO4. Interacts with QRICH2. Post-translationally, phosphorylated by STK33 during sperm flagella assembly. As to expression, expressed in flagella of epididymal sperm.

The protein localises to the cell projection. It is found in the cilium. Its subcellular location is the flagellum. Its function is as follows. Major structural component of sperm fibrous sheath. May play a role in sperm motility. The polypeptide is A-kinase anchor protein 4 (Rattus norvegicus (Rat)).